A 119-amino-acid polypeptide reads, in one-letter code: Holo-[acyl-carrier-protein] synthase (119 aa).

Mg(2+) contacts are provided by aspartate 5 and glutamate 51.

It belongs to the P-Pant transferase superfamily. AcpS family. Mg(2+) serves as cofactor.

The protein resides in the cytoplasm. It catalyses the reaction apo-[ACP] + CoA = holo-[ACP] + adenosine 3',5'-bisphosphate + H(+). Its function is as follows. Transfers the 4'-phosphopantetheine moiety from coenzyme A to a Ser of acyl-carrier-protein. This is Holo-[acyl-carrier-protein] synthase from Helicobacter pylori (strain HPAG1).